The following is a 346-amino-acid chain: UPF0324 membrane protein FN0533 (346 aa).

Transmembrane regions (helical) follow at residues 5–22 (LYGIILCFLLALPAWKLG), 27–49 (LVGGPVFGIIIGIVIAILLKNRA), 62–81 (VLQYAVILLGFGLNLQTIIS), 86–108 (SLPIIVSTISTSLIIAYILAKLI), 115–137 (VILIGVGSSICGGSAIAATAPVI), 147–169 (AISVIFLFNVIAALIFPTLGDIL), 216–233 (LTRTLAIIPITLFLAVYN), 248–270 (IFPMFIVYFILASIITTVCNYFI), 283–305 (INNVFSFFKHLSKFFIIMAMVAI), and 315–337 (ILSGAKPLTLGFCCWFAISLVSI).

It belongs to the UPF0324 family.

It is found in the cell membrane. This chain is UPF0324 membrane protein FN0533, found in Fusobacterium nucleatum subsp. nucleatum (strain ATCC 25586 / DSM 15643 / BCRC 10681 / CIP 101130 / JCM 8532 / KCTC 2640 / LMG 13131 / VPI 4355).